The primary structure comprises 410 residues: DNA primase small subunit (410 aa).

Active-site residues include glutamate 43, aspartate 106, and aspartate 108. The short motif at 118 to 129 is the Zinc knuckle motif element; the sequence is CCKDATVCPKCW.

The protein belongs to the eukaryotic-type primase small subunit family. Heterodimer of a small subunit and a large subunit.

Functionally, DNA primase is the polymerase that synthesizes small RNA primers for the Okazaki fragments made during discontinuous DNA replication. This chain is DNA primase small subunit (pri-1), found in Caenorhabditis elegans.